The sequence spans 370 residues: Protein TEEBE (370 aa).

An N-terminal signal peptide occupies residues methionine 1–serine 21. N-linked (GlcNAc...) asparagine glycosylation occurs at asparagine 215.

As to expression, expressed in primary and lateral roots, stigmatic papillae and hypocotyls.

The protein localises to the secreted. It is found in the cell wall. Prevents hypocotyl epidermal cells elongation by modulating the pectin status in cell walls. Likely regulates pectin methylesterification degree during cell separation and elongation, including upon root-knot nematode Meloidogyne incognita infection. The protein is Protein TEEBE of Arabidopsis thaliana (Mouse-ear cress).